The chain runs to 228 residues: tRNA (guanine-N(1)-)-methyltransferase (228 aa).

S-adenosyl-L-methionine-binding positions include Gly111 and 130 to 135 (IGDFVL).

It belongs to the RNA methyltransferase TrmD family. In terms of assembly, homodimer.

The protein localises to the cytoplasm. The enzyme catalyses guanosine(37) in tRNA + S-adenosyl-L-methionine = N(1)-methylguanosine(37) in tRNA + S-adenosyl-L-homocysteine + H(+). Functionally, specifically methylates guanosine-37 in various tRNAs. This chain is tRNA (guanine-N(1)-)-methyltransferase, found in Ureaplasma parvum serovar 3 (strain ATCC 27815 / 27 / NCTC 11736).